Consider the following 230-residue polypeptide: Large ribosomal subunit protein uL1 (230 aa).

The protein belongs to the universal ribosomal protein uL1 family. In terms of assembly, part of the 50S ribosomal subunit.

Binds directly to 23S rRNA. The L1 stalk is quite mobile in the ribosome, and is involved in E site tRNA release. Functionally, protein L1 is also a translational repressor protein, it controls the translation of the L11 operon by binding to its mRNA. The chain is Large ribosomal subunit protein uL1 from Gluconobacter oxydans (strain 621H) (Gluconobacter suboxydans).